Consider the following 190-residue polypeptide: RNA pyrophosphohydrolase (190 aa).

Residues 6–149 (GYRPNVGIVL…KRSVYARALC (144 aa)) form the Nudix hydrolase domain. A Nudix box motif is present at residues 38 to 59 (GGMHSDETPVEAMYRELNEETG).

Belongs to the Nudix hydrolase family. RppH subfamily. The cofactor is a divalent metal cation.

Its function is as follows. Accelerates the degradation of transcripts by removing pyrophosphate from the 5'-end of triphosphorylated RNA, leading to a more labile monophosphorylated state that can stimulate subsequent ribonuclease cleavage. The protein is RNA pyrophosphohydrolase of Xylella fastidiosa (strain Temecula1 / ATCC 700964).